The chain runs to 317 residues: Apolipoprotein E (317 aa).

Positions 1 to 18 (MKVLWAALLVTFLAGCQA) are cleaved as a signal peptide. Tandem repeats lie at residues 80–101 (ALMD…EQLT), 102–123 (PVAE…ARLG), 124–145 (ADME…AMLG), 146–167 (QSTE…KRLL), 168–189 (RDAD…EGAE), 190–211 (RGVS…VRAA), 212–233 (TVGS…ERLR), and 234–255 (ARME…EQVA). The 8 X 22 AA approximate tandem repeats stretch occupies residues 80–255 (ALMDETMKEL…RLDEVKEQVA (176 aa)). Methionine sulfoxide is present on Met-143. The residue at position 147 (Ser-147) is a Phosphoserine. The LDL and other lipoprotein receptors binding stretch occupies residues 158 to 168 (HLRKLRKRLLR). 162-165 (LRKR) contributes to the heparin binding site. Residues 210–290 (AATVGSVAGK…SWFEPLVEDM (81 aa)) are lipid-binding and lipoprotein association. 229-236 (GERLRARM) contacts heparin. The tract at residues 266–317 (QQIRLQAEAFQARLKSWFEPLVEDMQRQWAGLVEKVQAAVGTSAAPVPSDNH) is homooligomerization. The tract at residues 278-290 (RLKSWFEPLVEDM) is specificity for association with VLDL.

This sequence belongs to the apolipoprotein A1/A4/E family. As to quaternary structure, homotetramer. May interact with ABCA1; functionally associated with ABCA1 in the biogenesis of HDLs. May interact with APP/A4 amyloid-beta peptide; the interaction is extremely stable in vitro but its physiological significance is unclear. May interact with MAPT. May interact with MAP2. In the cerebrospinal fluid, interacts with secreted SORL1. Interacts with PMEL; this allows the loading of PMEL luminal fragment on ILVs to induce fibril nucleation. In terms of processing, APOE exists as multiple glycosylated and sialylated glycoforms within cells and in plasma. The extent of glycosylation and sialylation are tissue and context specific. Glycated in plasma VLDL. Post-translationally, phosphorylated by FAM20C in the extracellular medium.

The protein localises to the secreted. The protein resides in the extracellular space. It is found in the extracellular matrix. It localises to the extracellular vesicle. Its subcellular location is the endosome. The protein localises to the multivesicular body. Its function is as follows. APOE is an apolipoprotein, a protein associating with lipid particles, that mainly functions in lipoprotein-mediated lipid transport between organs via the plasma and interstitial fluids. APOE is a core component of plasma lipoproteins and is involved in their production, conversion and clearance. Apolipoproteins are amphipathic molecules that interact both with lipids of the lipoprotein particle core and the aqueous environment of the plasma. As such, APOE associates with chylomicrons, chylomicron remnants, very low density lipoproteins (VLDL) and intermediate density lipoproteins (IDL) but shows a preferential binding to high-density lipoproteins (HDL). It also binds a wide range of cellular receptors including the LDL receptor/LDLR, the LDL receptor-related proteins LRP1, LRP2 and LRP8 and the very low-density lipoprotein receptor/VLDLR that mediate the cellular uptake of the APOE-containing lipoprotein particles. Finally, APOE also has a heparin-binding activity and binds heparan-sulfate proteoglycans on the surface of cells, a property that supports the capture and the receptor-mediated uptake of APOE-containing lipoproteins by cells. A main function of APOE is to mediate lipoprotein clearance through the uptake of chylomicrons, VLDLs, and HDLs by hepatocytes. APOE is also involved in the biosynthesis by the liver of VLDLs as well as their uptake by peripheral tissues ensuring the delivery of triglycerides and energy storage in muscle, heart and adipose tissues. By participating in the lipoprotein-mediated distribution of lipids among tissues, APOE plays a critical role in plasma and tissues lipid homeostasis. APOE is also involved in two steps of reverse cholesterol transport, the HDLs-mediated transport of cholesterol from peripheral tissues to the liver, and thereby plays an important role in cholesterol homeostasis. First, it is functionally associated with ABCA1 in the biogenesis of HDLs in tissues. Second, it is enriched in circulating HDLs and mediates their uptake by hepatocytes. APOE also plays an important role in lipid transport in the central nervous system, regulating neuron survival and sprouting. The polypeptide is Apolipoprotein E (APOE) (Pongo pygmaeus (Bornean orangutan)).